We begin with the raw amino-acid sequence, 322 residues long: MFSRYAFRCAQPLRQSARQYSTEAPKSKSLAPVYVAVGLAGLGVGLYRYQSGAATAEAPAERPKVFTGGDQGWVNLKLSDIEILSHNTKRLRFEFPDKEAVSGLHIASALLTKYSPPDGSKPVIRPYTPTSDEDQPGYLELVVKRYPNGPMSEHLHNMNVDQRLDFKGPLPKYPWEANKHKHICLVAGGTGITPMYQLAREIFKNPEDKTKVTLVFGNVSEEDILLKREFEDLENTYPQRFRAFYVLDNPPEGWTGGKGYITKELLKTVLPEPKEENIKIFVCGPPGMYKAISGPKVSPKDQGELTGILKELGYSKDQVYKF.

Residues 30–46 (LAPVYVAVGLAGLGVGL) traverse the membrane as a helical segment. The FAD-binding FR-type domain occupies 71 to 176 (QGWVNLKLSD…KGPLPKYPWE (106 aa)). Position 179–214 (179–214 (KHKHICLVAGGTGITPMYQLAREIFKNPEDKTKVTL)) interacts with FAD.

Belongs to the flavoprotein pyridine nucleotide cytochrome reductase family. It depends on FAD as a cofactor.

It is found in the mitochondrion outer membrane. It catalyses the reaction 2 Fe(III)-[cytochrome b5] + NADH = 2 Fe(II)-[cytochrome b5] + NAD(+) + H(+). May mediate the reduction of outer membrane cytochrome b5. This chain is NADH-cytochrome b5 reductase 2 (mcr1), found in Emericella nidulans (strain FGSC A4 / ATCC 38163 / CBS 112.46 / NRRL 194 / M139) (Aspergillus nidulans).